We begin with the raw amino-acid sequence, 425 residues long: Histone-binding protein RBBP4 (425 aa).

The residue at position 2 (alanine 2) is an N-acetylalanine. WD repeat units follow at residues 32-125 (YDLV…NHEG), 126-175 (EVNR…RLRG), 176-223 (HQKE…KTIF), 225-270 (GHTA…HSVD), 271-314 (AHTA…HSFE), 315-371 (SHKD…FIHG), and 372-404 (GHTA…VWQM).

Belongs to the WD repeat RBAP46/RBAP48/MSI1 family. Binds directly to histone H4, probably via helix 1 of the histone fold, a region that is not accessible when histone H4 is in chromatin. Forms a large corepressor complex that contains ncor1, sin3a and possibly sin3b, histone deacetylases hdac2, hdac1, rbbp4 and possibly rbbp7.

It localises to the nucleus. Its subcellular location is the chromosome. It is found in the telomere. Core histone-binding subunit that may target chromatin assembly factors, chromatin remodeling factors and histone deacetylases to their histone substrates in a manner that is regulated by nucleosomal DNA. Component of several complexes which regulate chromatin metabolism. This chain is Histone-binding protein RBBP4 (rbbp4), found in Xenopus tropicalis (Western clawed frog).